The chain runs to 92 residues: UPF0473 protein BCE33L4129 (92 aa).

Belongs to the UPF0473 family.

This Bacillus cereus (strain ZK / E33L) protein is UPF0473 protein BCE33L4129.